A 531-amino-acid polypeptide reads, in one-letter code: SWI/SNF-related matrix-associated actin-dependent regulator of chromatin subfamily D member 2 (531 aa).

R81 and R104 each carry asymmetric dimethylarginine. S203 carries the phosphoserine modification. The segment at 205 to 227 is disordered; it reads SKAEGDTAGTTGTPGGTPAGDKV. T217 carries the phosphothreonine modification. K226 is covalently cross-linked (Glycyl lysine isopeptide (Lys-Gly) (interchain with G-Cter in SUMO2)). The SWIB/MDM2 domain maps to 306–383; the sequence is HQPPQYKLDP…PMKLAGLLQH (78 aa).

The protein belongs to the SMARCD family. In terms of assembly, component of the multiprotein chromatin-remodeling complexes SWI/SNF: SWI/SNF-A (BAF), SWI/SNF-B (PBAF) and related complexes. The canonical complex contains a catalytic subunit (either SMARCA4/BRG1/BAF190A or SMARCA2/BRM/BAF190B), and at least SMARCE1, ACTL6A/BAF53, SMARCC1/BAF155, SMARCC2/BAF170, and SMARCB1/SNF5/BAF47. Other subunits specific to each of the complexes may also be present permitting several possible combinations developmentally and tissue specific. Component of the BAF complex, which includes at least actin (ACTB), ARID1A/BAF250A, ARID1B/BAF250B, SMARCA2/BRM, SMARCA4/BRG1, ACTL6A/BAF53, ACTL6B/BAF53B, SMARCE1/BAF57, SMARCC1/BAF155, SMARCC2/BAF170, SMARCB1/SNF5/INI1, and one or more SMARCD1/BAF60A, SMARCD2/BAF60B, or SMARCD3/BAF60C. In muscle cells, the BAF complex also contains DPF3. Component of the SWI/SNF-B (PBAF) chromatin remodeling complex, at least composed of SMARCA4/BRG1, SMARCB1/BAF47/SNF5, ACTL6A/BAF53A or ACTL6B/BAF53B, SMARCE1/BAF57, SMARCD1/BAF60A, SMARCD2/BAF60B, perhaps SMARCD3/BAF60C, SMARCC1/BAF155, SMARCC2/BAF170, PBRM1/BAF180, ARID2/BAF200 and actin (ACTB). Interacts with UNKL. Interacts with CEBPE. Ubiquitinated through a signaling process involving RAC1 and the RING finger protein UNKL.

Its subcellular location is the nucleus. Involved in transcriptional activation and repression of select genes by chromatin remodeling (alteration of DNA-nucleosome topology). Component of SWI/SNF chromatin remodeling complexes that carry out key enzymatic activities, changing chromatin structure by altering DNA-histone contacts within a nucleosome in an ATP-dependent manner. Critical regulator of myeloid differentiation, controlling granulocytopoiesis and the expression of genes involved in neutrophil granule formation. The polypeptide is SWI/SNF-related matrix-associated actin-dependent regulator of chromatin subfamily D member 2 (SMARCD2) (Bos taurus (Bovine)).